Consider the following 297-residue polypeptide: Cell division protein ZipA (297 aa).

Position 1 (Met1) is a topological domain, periplasmic. A helical transmembrane segment spans residues 2–22; sequence EIGLREWLILIGIIVIAGILF. Topologically, residues 23-297 are cytoplasmic; it reads DGWRRMRGGK…FERRALTQKR (275 aa). A disordered region spans residues 48–151; sequence DEEGGSAEVL…AAPASNSVKE (104 aa). Over residues 83–92 the composition is skewed to basic and acidic residues; the sequence is ARDREREPKP. The span at 124–133 shows a compositional bias: acidic residues; sequence LFSDSDDDFA.

It belongs to the ZipA family. In terms of assembly, interacts with FtsZ via their C-terminal domains.

Its subcellular location is the cell inner membrane. Its function is as follows. Essential cell division protein that stabilizes the FtsZ protofilaments by cross-linking them and that serves as a cytoplasmic membrane anchor for the Z ring. Also required for the recruitment to the septal ring of downstream cell division proteins. This Pseudomonas putida (strain ATCC 47054 / DSM 6125 / CFBP 8728 / NCIMB 11950 / KT2440) protein is Cell division protein ZipA.